We begin with the raw amino-acid sequence, 678 residues long: Macrolide export ATP-binding/permease protein MacB 1 (678 aa).

The region spanning 11 to 249 (LRLENVSREF…PKMVDIPSVI (239 aa)) is the ABC transporter domain. 47-54 (GTSGSGKS) contributes to the ATP binding site. 4 helical membrane-spanning segments follow: residues 303–323 (ALTMLGIIIGIASVVSVVALG), 558–578 (IAVISLIVGGIGVMNIMLVSV), 608–628 (LVCLLGGSLGVALSLGIGLLF), and 641–661 (AASIITAFVCSSLIGVIFGFF).

It belongs to the ABC transporter superfamily. Macrolide exporter (TC 3.A.1.122) family. As to quaternary structure, homodimer. Part of the tripartite efflux system MacAB-TolC, which is composed of an inner membrane transporter, MacB, a periplasmic membrane fusion protein, MacA, and an outer membrane component, TolC. The complex forms a large protein conduit and can translocate molecules across both the inner and outer membranes. Interacts with MacA.

It is found in the cell inner membrane. In terms of biological role, part of the tripartite efflux system MacAB-TolC. MacB is a non-canonical ABC transporter that contains transmembrane domains (TMD), which form a pore in the inner membrane, and an ATP-binding domain (NBD), which is responsible for energy generation. Confers resistance against macrolides. The polypeptide is Macrolide export ATP-binding/permease protein MacB 1 (Yersinia pestis bv. Antiqua (strain Nepal516)).